A 292-amino-acid chain; its full sequence is uncharacterized protein (292 aa).

The first 19 residues, 1–19 (MFKKYIFILLLLVTSIVKA), serve as a signal peptide directing secretion. A disordered region spans residues 271 to 292 (KRNNPPLKTNNAKSKNPYDQSK).

This is an uncharacterized protein from Rickettsia bellii (strain RML369-C).